The primary structure comprises 444 residues: Glutamyl-tRNA reductase (444 aa).

Substrate contacts are provided by residues 49–52, Ser-109, 114–116, and Gln-120; these read TCNR and ETQ. The active-site Nucleophile is the Cys-50. 189–194 provides a ligand contact to NADP(+); it reads GAGKMG.

Belongs to the glutamyl-tRNA reductase family. In terms of assembly, homodimer.

The catalysed reaction is (S)-4-amino-5-oxopentanoate + tRNA(Glu) + NADP(+) = L-glutamyl-tRNA(Glu) + NADPH + H(+). The protein operates within porphyrin-containing compound metabolism; protoporphyrin-IX biosynthesis; 5-aminolevulinate from L-glutamyl-tRNA(Glu): step 1/2. In terms of biological role, catalyzes the NADPH-dependent reduction of glutamyl-tRNA(Glu) to glutamate 1-semialdehyde (GSA). This Bacillus cereus (strain 03BB102) protein is Glutamyl-tRNA reductase.